Here is a 266-residue protein sequence, read N- to C-terminus: NAD-capped RNA hydrolase NudC (266 aa).

Residue Arg-74 coordinates substrate. Zn(2+)-binding residues include Cys-103, Cys-106, Cys-121, and Cys-124. A substrate-binding site is contributed by Tyr-129. Positions Pro-130–Thr-253 constitute a Nudix hydrolase domain. Positions 163, 179, and 183 each coordinate a divalent metal cation. Positions Gly-164–Gly-185 match the Nudix box motif. Gln-197–Asn-204 is a binding site for substrate. Residue Glu-224 coordinates a divalent metal cation. Residue Ala-246 participates in substrate binding.

This sequence belongs to the Nudix hydrolase family. NudC subfamily. In terms of assembly, homodimer. Requires Mg(2+) as cofactor. The cofactor is Mn(2+). It depends on Zn(2+) as a cofactor.

The catalysed reaction is a 5'-end NAD(+)-phospho-ribonucleoside in mRNA + H2O = a 5'-end phospho-adenosine-phospho-ribonucleoside in mRNA + beta-nicotinamide D-ribonucleotide + 2 H(+). It carries out the reaction NAD(+) + H2O = beta-nicotinamide D-ribonucleotide + AMP + 2 H(+). The enzyme catalyses NADH + H2O = reduced beta-nicotinamide D-ribonucleotide + AMP + 2 H(+). In terms of biological role, mRNA decapping enzyme that specifically removes the nicotinamide adenine dinucleotide (NAD) cap from a subset of mRNAs by hydrolyzing the diphosphate linkage to produce nicotinamide mononucleotide (NMN) and 5' monophosphate mRNA. The NAD-cap is present at the 5'-end of some mRNAs and stabilizes RNA against 5'-processing. Has preference for mRNAs with a 5'-end purine. Catalyzes the hydrolysis of a broad range of dinucleotide pyrophosphates. The protein is NAD-capped RNA hydrolase NudC of Photobacterium profundum (strain SS9).